We begin with the raw amino-acid sequence, 127 residues long: Small ribosomal subunit protein bS16 (127 aa).

Positions 80-127 (GLKKRPTRNNPHKGEPGKKAQERIAAAKQAAEEAAAAKTESAPISEEV) are disordered. Over residues 81 to 90 (LKKRPTRNNP) the composition is skewed to basic residues. Residues 91-101 (HKGEPGKKAQE) show a composition bias toward basic and acidic residues. Residues 102-121 (RIAAAKQAAEEAAAAKTESA) are compositionally biased toward low complexity.

It belongs to the bacterial ribosomal protein bS16 family.

This is Small ribosomal subunit protein bS16 from Bartonella henselae (strain ATCC 49882 / DSM 28221 / CCUG 30454 / Houston 1) (Rochalimaea henselae).